A 933-amino-acid chain; its full sequence is 2-oxoglutarate dehydrogenase E1 component (933 aa).

This sequence belongs to the alpha-ketoglutarate dehydrogenase family. As to quaternary structure, homodimer. Part of the 2-oxoglutarate dehydrogenase (OGDH) complex composed of E1 (2-oxoglutarate dehydrogenase), E2 (dihydrolipoamide succinyltransferase) and E3 (dihydrolipoamide dehydrogenase); the complex contains multiple copies of the three enzymatic components (E1, E2 and E3). The cofactor is thiamine diphosphate.

The catalysed reaction is N(6)-[(R)-lipoyl]-L-lysyl-[protein] + 2-oxoglutarate + H(+) = N(6)-[(R)-S(8)-succinyldihydrolipoyl]-L-lysyl-[protein] + CO2. In terms of biological role, E1 component of the 2-oxoglutarate dehydrogenase (OGDH) complex which catalyzes the decarboxylation of 2-oxoglutarate, the first step in the conversion of 2-oxoglutarate to succinyl-CoA and CO(2). The protein is 2-oxoglutarate dehydrogenase E1 component (sucA) of Rickettsia typhi (strain ATCC VR-144 / Wilmington).